The chain runs to 235 residues: Ribitol-5-phosphate cytidylyltransferase (235 aa).

CTP-binding positions include 7 to 10 (LAGG), 82 to 88 (GADRNTS), and Ser113.

It belongs to the IspD/TarI cytidylyltransferase family. TarI subfamily.

The enzyme catalyses D-ribitol 5-phosphate + CTP + H(+) = CDP-L-ribitol + diphosphate. Its pathway is cell wall biogenesis; poly(ribitol phosphate) teichoic acid biosynthesis. Functionally, catalyzes the transfer of the cytidylyl group of CTP to D-ribitol 5-phosphate. This chain is Ribitol-5-phosphate cytidylyltransferase, found in Streptococcus pneumoniae (strain CGSP14).